A 320-amino-acid chain; its full sequence is Chitinase 3 (320 aa).

The N-terminal stretch at 1–18 is a signal peptide; the sequence is MRALALAVVAMAVVAVRG. Residues 19–59 enclose the Chitin-binding type-1 domain; sequence EQCGSQAGGALCPNCLCCSQYGWCGSTSDYCGAGCQSQCSG. Disulfide bonds link cysteine 21–cysteine 36, cysteine 30–cysteine 42, cysteine 33–cysteine 61, cysteine 35–cysteine 49, cysteine 53–cysteine 57, cysteine 97–cysteine 159, cysteine 172–cysteine 180, and cysteine 279–cysteine 311. Glutamate 141 acts as the Proton donor in catalysis.

This sequence belongs to the glycosyl hydrolase 19 family. Chitinase class I subfamily. Expressed at low levels in roots, leaves, sheaths and meristems.

It catalyses the reaction Random endo-hydrolysis of N-acetyl-beta-D-glucosaminide (1-&gt;4)-beta-linkages in chitin and chitodextrins.. Hydrolyzes chitin and plays a role in defense against fungal pathogens containing chitin. Inhibits the growth of T.reesei fungus on plate assay. The chain is Chitinase 3 (Cht3) from Oryza sativa subsp. japonica (Rice).